The chain runs to 290 residues: PIH1 domain-containing protein 1 (290 aa).

Phosphoserine occurs at positions 12, 16, and 173.

Belongs to the PIH1 family. In terms of assembly, component of the R2TP complex composed at least of RUVBL1, RUVBL2, RPAP3 and PIHD1. Component of the PAQosome complex which is responsible for the biogenesis of several protein complexes and which consists of R2TP complex members RUVBL1, RUVBL2, RPAP3 and PIH1D1, URI complex members PFDN2, PFDN6, PDRG1, UXT and URI1 as well as ASDURF, POLR2E and DNAAF10/WDR92. Interacts with phosphorylated TELO2. Mediates interaction of TELO2 with the R2TP complex. Interacts with phosphorylated ECD, EFTUD2/SNRP116, RPB1 and UBR5 and with RPB1 in a phosphorylation-independent manner. Interacts with the core C/D box snoRNP particle components NOP58 and FBL and with RUVBL1/TIP49. Interacts with RPAP3 and DNAAF10. Interacts with histone H4 and with SWI/SNF complex member SMARCB1/SNF5. Interacts with the mTORC1 complex member RPTOR. Interacts with isoform 1 of MSL1.

It localises to the nucleus. Involved in the assembly of C/D box small nucleolar ribonucleoprotein (snoRNP) particles. Recruits the SWI/SNF complex to the core promoter of rRNA genes and enhances pre-rRNA transcription. Mediates interaction of TELO2 with the R2TP complex which is necessary for the stability of MTOR and SMG1. Positively regulates the assembly and activity of the mTORC1 complex. The protein is PIH1 domain-containing protein 1 (Pih1d1) of Mus musculus (Mouse).